We begin with the raw amino-acid sequence, 97 residues long: UstYa family oxidase VicYc (97 aa).

Short sequence motifs (HXXHC) lie at residues 11 to 15 and 38 to 42; these read HELHC and HANHC.

The protein belongs to the ustYa family.

It participates in mycotoxin biosynthesis. Functionally, ustYa family oxidase, part of the gene cluster that mediates the biosynthesis of the secondary metabolite victorin, the molecular basis for Victoria blight of oats. The role of vicYc within the pathway has still to be determined. The pathway starts with the processing of the precursor vicA1 by several endopeptidases including kexin proteases as well as the cluster-specific S28 family peptidases vicPa and vicPb to produce 7 identical copies of the hexapeptide Gly-Leu-Lys-Leu-Ala-Phe. After being excised from the precursor peptide, the core peptides are cyclized and modified post-translationally by enzymes encoded within the gene cluster. The ustYa family oxidase vicYb is required for the formation of the macrocycle in victorin and the copper amine oxidases (CAOs) vicK1 and vicK2 are responsible for converting victorin to the active form by oxidizing the N-terminal glycyl residue in the peptides to glyoxylate. Relaxed substrate specificity of enzymes in the victorin biosynthetic pathway results in a metabolic grid that produces a set of analogs including victorinines B, C, E or HV-toxin M. The protein is UstYa family oxidase VicYc of Bipolaris victoriae (strain FI3) (Victoria blight of oats agent).